The primary structure comprises 283 residues: Probable endonuclease 4 (283 aa).

Zn(2+)-binding residues include His-67, His-107, Glu-144, Asp-178, His-181, His-215, Asp-228, His-230, and Glu-260.

It belongs to the AP endonuclease 2 family. The cofactor is Zn(2+).

The enzyme catalyses Endonucleolytic cleavage to 5'-phosphooligonucleotide end-products.. Endonuclease IV plays a role in DNA repair. It cleaves phosphodiester bonds at apurinic or apyrimidinic (AP) sites, generating a 3'-hydroxyl group and a 5'-terminal sugar phosphate. The protein is Probable endonuclease 4 of Citrifermentans bemidjiense (strain ATCC BAA-1014 / DSM 16622 / JCM 12645 / Bem) (Geobacter bemidjiensis).